Reading from the N-terminus, the 212-residue chain is Orotate phosphoribosyltransferase (212 aa).

Residues R95, K99, H101, and 121–129 contribute to the 5-phospho-alpha-D-ribose 1-diphosphate site; that span reads DDLITTGGS. T125 contacts orotate.

Belongs to the purine/pyrimidine phosphoribosyltransferase family. PyrE subfamily. In terms of assembly, homodimer. The cofactor is Mg(2+).

The catalysed reaction is orotidine 5'-phosphate + diphosphate = orotate + 5-phospho-alpha-D-ribose 1-diphosphate. It functions in the pathway pyrimidine metabolism; UMP biosynthesis via de novo pathway; UMP from orotate: step 1/2. In terms of biological role, catalyzes the transfer of a ribosyl phosphate group from 5-phosphoribose 1-diphosphate to orotate, leading to the formation of orotidine monophosphate (OMP). This chain is Orotate phosphoribosyltransferase, found in Lactobacillus johnsonii (strain CNCM I-12250 / La1 / NCC 533).